An 887-amino-acid chain; its full sequence is Pyruvate, phosphate dikinase 2 (887 aa).

A Phosphothreonine; by PDRP1 modification is found at Thr-467. The Tele-phosphohistidine intermediate role is filled by His-469. Arg-575, Arg-632, Glu-761, Gly-782, Thr-783, Asn-784, and Asp-785 together coordinate substrate. Glu-761 is a binding site for Mg(2+). Mg(2+) is bound at residue Asp-785. Cys-847 functions as the Proton donor in the catalytic mechanism.

Belongs to the PEP-utilizing enzyme family. Mg(2+) serves as cofactor.

Its subcellular location is the cytoplasm. It catalyses the reaction pyruvate + phosphate + ATP = phosphoenolpyruvate + AMP + diphosphate + H(+). Formation of phosphoenolpyruvate. This is Pyruvate, phosphate dikinase 2 (PPDK2) from Oryza sativa subsp. japonica (Rice).